The primary structure comprises 386 residues: Phosphoglycerate kinase (386 aa).

Substrate is bound by residues 21–23 (DLN), Arg-36, 59–62 (HLGR), Arg-113, and Arg-146. Residues Lys-197, Glu-314, and 340–343 (GGDT) each bind ATP.

This sequence belongs to the phosphoglycerate kinase family. Monomer.

The protein resides in the cytoplasm. It catalyses the reaction (2R)-3-phosphoglycerate + ATP = (2R)-3-phospho-glyceroyl phosphate + ADP. It participates in carbohydrate degradation; glycolysis; pyruvate from D-glyceraldehyde 3-phosphate: step 2/5. The chain is Phosphoglycerate kinase from Marinobacter nauticus (strain ATCC 700491 / DSM 11845 / VT8) (Marinobacter aquaeolei).